The primary structure comprises 479 residues: MNFETIIGLEVHVELNTNSKIFSPSSAHFGEDPNANTNVIDWSFPGVLPVMNKGVIDAGIKAALALNMDIHKEMHFDRKNYFYPDNPKAYQISQFDEPIGYNGWIEIKLEDGSTKKIRIERAHLEEDAGKNTHGTDGYSYVDLNRQGVPLIEIVSEADMRSPEEAYAYLTALKEIIQYTGISDVKMEEGSMRVDANISLRPYGQEQFGTKTELKNLNSFSNVRKGLEFEVERQAKLLRSGGVIRQETRRYDEANKGTILMRVKEGAADYRYFPEPDLPLYEIDDAWIDEMRAQLPQFPAQRRAKYEEELGLSAYDASQLTATKALSDFFETAVSLGGDAKQVSNWLQGEVAQFLNAEGKTIEEIRLTPDNLVEMIAIIADGTISSKMAKKVFVHLAKNGGSARAYVEKAGLVQISDPAVLVPIIHQVFADNEAAVADFKSGKRNADKAFTGFLMKATKGQANPQVAQQLLAQELQKLRD.

The protein belongs to the GatB/GatE family. GatB subfamily. In terms of assembly, heterotrimer of A, B and C subunits.

The catalysed reaction is L-glutamyl-tRNA(Gln) + L-glutamine + ATP + H2O = L-glutaminyl-tRNA(Gln) + L-glutamate + ADP + phosphate + H(+). It catalyses the reaction L-aspartyl-tRNA(Asn) + L-glutamine + ATP + H2O = L-asparaginyl-tRNA(Asn) + L-glutamate + ADP + phosphate + 2 H(+). Allows the formation of correctly charged Asn-tRNA(Asn) or Gln-tRNA(Gln) through the transamidation of misacylated Asp-tRNA(Asn) or Glu-tRNA(Gln) in organisms which lack either or both of asparaginyl-tRNA or glutaminyl-tRNA synthetases. The reaction takes place in the presence of glutamine and ATP through an activated phospho-Asp-tRNA(Asn) or phospho-Glu-tRNA(Gln). In Streptococcus pyogenes serotype M28 (strain MGAS6180), this protein is Aspartyl/glutamyl-tRNA(Asn/Gln) amidotransferase subunit B.